The following is a 38-amino-acid chain: Large ribosomal subunit protein bL36 (38 aa).

Belongs to the bacterial ribosomal protein bL36 family.

The protein is Large ribosomal subunit protein bL36 of Lacticaseibacillus casei (strain BL23) (Lactobacillus casei).